Reading from the N-terminus, the 152-residue chain is Phospholipase A2 GL16-1 (152 aa).

A signal peptide spans 1 to 21; it reads MNPAHLLVLLAVCVSLLGAST. Positions 22-27 are excised as a propeptide; the sequence is IPPLPL. 7 cysteine pairs are disulfide-bonded: Cys-38–Cys-104, Cys-54–Cys-151, Cys-56–Cys-72, Cys-71–Cys-132, Cys-78–Cys-125, Cys-88–Cys-118, and Cys-111–Cys-123. Ca(2+) contacts are provided by Tyr-55, Gly-57, and Gly-59. Residue His-75 is part of the active site. Asp-76 lines the Ca(2+) pocket. Asp-126 is a catalytic residue.

Belongs to the phospholipase A2 family. Group I subfamily. Ca(2+) is required as a cofactor.

Its subcellular location is the secreted. It carries out the reaction a 1,2-diacyl-sn-glycero-3-phosphocholine + H2O = a 1-acyl-sn-glycero-3-phosphocholine + a fatty acid + H(+). In terms of biological role, PA2 catalyzes the calcium-dependent hydrolysis of the 2-acyl groups in 3-sn-phosphoglycerides. This chain is Phospholipase A2 GL16-1, found in Laticauda semifasciata (Black-banded sea krait).